Reading from the N-terminus, the 110-residue chain is Iron-sulfur cluster assembly protein CyaY (110 aa).

The protein belongs to the frataxin family.

Functionally, involved in iron-sulfur (Fe-S) cluster assembly. May act as a regulator of Fe-S biogenesis. The sequence is that of Iron-sulfur cluster assembly protein CyaY from Pseudomonas fluorescens (strain SBW25).